The primary structure comprises 366 residues: Glutamate 5-kinase (366 aa).

Lys17 lines the ATP pocket. Residues Ser57, Asp144, and Asn156 each contribute to the substrate site. ATP-binding positions include 176–177 (SD) and 216–222 (TGGMASK). Positions 278–352 (QGILHIDEGA…GKSTQELPAE (75 aa)) constitute a PUA domain.

It belongs to the glutamate 5-kinase family.

It is found in the cytoplasm. It catalyses the reaction L-glutamate + ATP = L-glutamyl 5-phosphate + ADP. Its pathway is amino-acid biosynthesis; L-proline biosynthesis; L-glutamate 5-semialdehyde from L-glutamate: step 1/2. In terms of biological role, catalyzes the transfer of a phosphate group to glutamate to form L-glutamate 5-phosphate. The chain is Glutamate 5-kinase from Rhodococcus opacus (strain B4).